Here is a 316-residue protein sequence, read N- to C-terminus: Delta(1)-pyrroline-2-carboxylate reductase (316 aa).

The protein belongs to the ornithine cyclodeaminase/mu-crystallin family. Homodimer.

The catalysed reaction is L-proline + NAD(+) = 1-pyrroline-2-carboxylate + NADH + H(+). The enzyme catalyses L-proline + NADP(+) = 1-pyrroline-2-carboxylate + NADPH + H(+). Catalyzes the reduction of Delta(1)-pyrroline-2-carboxylate (Pyr2C) to L-proline, using preferentially NADPH over NADH as the electron donor. Together with LhpH, is involved in a metabolic pathway that converts trans-3-hydroxy-L-proline (t3LHyp) to L-proline. To a much lesser extent, can also reduce Delta(1)-piperideine-2-carboxylate (Pip2C) to L-pipecolate in vitro; however, this activity has likely no physiological significance in vivo since C.psychrerythraea probably possesses no ability to metabolize D-lysine via the L-pipecolate pathway. Does not show ornithine cyclodeaminase (OCD) activity. The sequence is that of Delta(1)-pyrroline-2-carboxylate reductase from Colwellia psychrerythraea (strain 34H / ATCC BAA-681) (Vibrio psychroerythus).